A 392-amino-acid polypeptide reads, in one-letter code: Probable tRNA sulfurtransferase (392 aa).

Positions 61-168 constitute a THUMP domain; the sequence is DEALKLLSKV…EFTYIYSEII (108 aa). ATP contacts are provided by residues 185–186, 210–211, Arg267, Gly289, and Gln298; these read LL and HF.

Belongs to the ThiI family.

The protein localises to the cytoplasm. It carries out the reaction [ThiI sulfur-carrier protein]-S-sulfanyl-L-cysteine + a uridine in tRNA + 2 reduced [2Fe-2S]-[ferredoxin] + ATP + H(+) = [ThiI sulfur-carrier protein]-L-cysteine + a 4-thiouridine in tRNA + 2 oxidized [2Fe-2S]-[ferredoxin] + AMP + diphosphate. The catalysed reaction is [ThiS sulfur-carrier protein]-C-terminal Gly-Gly-AMP + S-sulfanyl-L-cysteinyl-[cysteine desulfurase] + AH2 = [ThiS sulfur-carrier protein]-C-terminal-Gly-aminoethanethioate + L-cysteinyl-[cysteine desulfurase] + A + AMP + 2 H(+). The protein operates within cofactor biosynthesis; thiamine diphosphate biosynthesis. In terms of biological role, catalyzes the ATP-dependent transfer of a sulfur to tRNA to produce 4-thiouridine in position 8 of tRNAs, which functions as a near-UV photosensor. Also catalyzes the transfer of sulfur to the sulfur carrier protein ThiS, forming ThiS-thiocarboxylate. This is a step in the synthesis of thiazole, in the thiamine biosynthesis pathway. The sulfur is donated as persulfide by IscS. The polypeptide is Probable tRNA sulfurtransferase (Acetivibrio thermocellus (strain ATCC 27405 / DSM 1237 / JCM 9322 / NBRC 103400 / NCIMB 10682 / NRRL B-4536 / VPI 7372) (Clostridium thermocellum)).